The following is a 379-amino-acid chain: UDP-N-acetylglucosamine--N-acetylmuramyl-(pentapeptide) pyrophosphoryl-undecaprenol N-acetylglucosamine transferase (379 aa).

UDP-N-acetyl-alpha-D-glucosamine-binding positions include 19–21 (TGG), Asn133, Arg174, Ser207, Ile261, and Gln306.

This sequence belongs to the glycosyltransferase 28 family. MurG subfamily.

Its subcellular location is the cell inner membrane. It carries out the reaction di-trans,octa-cis-undecaprenyl diphospho-N-acetyl-alpha-D-muramoyl-L-alanyl-D-glutamyl-meso-2,6-diaminopimeloyl-D-alanyl-D-alanine + UDP-N-acetyl-alpha-D-glucosamine = di-trans,octa-cis-undecaprenyl diphospho-[N-acetyl-alpha-D-glucosaminyl-(1-&gt;4)]-N-acetyl-alpha-D-muramoyl-L-alanyl-D-glutamyl-meso-2,6-diaminopimeloyl-D-alanyl-D-alanine + UDP + H(+). The protein operates within cell wall biogenesis; peptidoglycan biosynthesis. In terms of biological role, cell wall formation. Catalyzes the transfer of a GlcNAc subunit on undecaprenyl-pyrophosphoryl-MurNAc-pentapeptide (lipid intermediate I) to form undecaprenyl-pyrophosphoryl-MurNAc-(pentapeptide)GlcNAc (lipid intermediate II). The polypeptide is UDP-N-acetylglucosamine--N-acetylmuramyl-(pentapeptide) pyrophosphoryl-undecaprenol N-acetylglucosamine transferase (Porphyromonas gingivalis (strain ATCC BAA-308 / W83)).